The primary structure comprises 98 residues: Acylphosphatase (98 aa).

An Acylphosphatase-like domain is found at Thr-12 to Gln-98. Residues Arg-27 and Asn-45 contribute to the active site.

The protein belongs to the acylphosphatase family.

The enzyme catalyses an acyl phosphate + H2O = a carboxylate + phosphate + H(+). The chain is Acylphosphatase (acyP) from Burkholderia cenocepacia (strain HI2424).